The chain runs to 103 residues: MAAVSLSVSTVTPLGDRVFVKVAEAEEKTAGGIILPDNAKEKPQVGEIVAVGPGKRNDDGSRQAPEVKIGDKVLYSKYAGTDIKLGNDDYVLLSEKDILAVVA.

It belongs to the GroES chaperonin family. In terms of assembly, heptamer of 7 subunits arranged in a ring. Interacts with the chaperonin GroEL.

The protein localises to the cytoplasm. Together with the chaperonin GroEL, plays an essential role in assisting protein folding. The GroEL-GroES system forms a nano-cage that allows encapsulation of the non-native substrate proteins and provides a physical environment optimized to promote and accelerate protein folding. GroES binds to the apical surface of the GroEL ring, thereby capping the opening of the GroEL channel. The chain is Co-chaperonin GroES from Synechococcus elongatus (strain ATCC 33912 / PCC 7942 / FACHB-805) (Anacystis nidulans R2).